We begin with the raw amino-acid sequence, 95 residues long: Cell division topological specificity factor (95 aa).

Belongs to the MinE family.

Prevents the cell division inhibition by proteins MinC and MinD at internal division sites while permitting inhibition at polar sites. This ensures cell division at the proper site by restricting the formation of a division septum at the midpoint of the long axis of the cell. The chain is Cell division topological specificity factor from Trichodesmium erythraeum (strain IMS101).